Reading from the N-terminus, the 252-residue chain is 5-oxoprolinase subunit A (252 aa).

It belongs to the LamB/PxpA family. In terms of assembly, forms a complex composed of PxpA, PxpB and PxpC.

It carries out the reaction 5-oxo-L-proline + ATP + 2 H2O = L-glutamate + ADP + phosphate + H(+). Catalyzes the cleavage of 5-oxoproline to form L-glutamate coupled to the hydrolysis of ATP to ADP and inorganic phosphate. The sequence is that of 5-oxoprolinase subunit A from Chloroflexus aggregans (strain MD-66 / DSM 9485).